Here is a 652-residue protein sequence, read N- to C-terminus: Leucine-rich repeat-containing protein 4 (652 aa).

Positions 1–40 (MKLLWQVTVHHTWNAVLLPVVYLTAQVWILCAAIAAAASA) are cleaved as a signal peptide. In terms of domain architecture, LRRNT spans 41-74 (GPQNCPSVCSCSNQFSKVVCTRRGLSEVPQGIPS). Residues 41–526 (GPQNCPSVCS…SLDEVMKTTK (486 aa)) lie on the Extracellular side of the membrane. Disulfide bonds link cysteine 45/cysteine 51 and cysteine 49/cysteine 60. LRR repeat units lie at residues 75 to 96 (NTRY…TFRH), 99 to 120 (HLEV…AFNG), 123 to 144 (SLNT…AFEY), 147 to 168 (KLRE…AFNR), 171 to 193 (SLMR…AFEG), 196 to 217 (NLKY…TPLV), 218 to 239 (GLEE…SFHG), 242 to 263 (SLKK…AFDG), and 266 to 287 (SLVE…LFTP). N-linked (GlcNAc...) asparagine glycans are attached at residues asparagine 276, asparagine 321, asparagine 362, asparagine 387, asparagine 409, asparagine 433, asparagine 439, and asparagine 449. An LRRCT domain is found at 299-351 (NPWNCDCDILWLAWWLREYIPTNSTCCGRCHAPMHMRGRYLVEVDQAAFQCSA). Intrachain disulfides connect cysteine 303–cysteine 328 and cysteine 305–cysteine 349. The region spanning 352-441 (PFIMDAPRDL…SNASAYLNVS (90 aa)) is the Ig-like domain. Cysteines 373 and 423 form a disulfide. The chain crosses the membrane as a helical span at residues 527 to 547 (IIIGCFVAVTLLAAAMLIVFY). The Cytoplasmic segment spans residues 548–652 (KLRKRHQQRS…TKDKVQETQI (105 aa)).

As to quaternary structure, interacts (via LRR repeats) with NTNG2. Interacts with DLG4. Forms a complex with DLG4 and with NMDA receptors. N-glycosylated. As to expression, specifically expressed in brain. In the hippocampus, parietal cortex and piriform cortex expressed in proximal segments of CA1 pyramidal neurons.

It is found in the membrane. It localises to the postsynaptic cell membrane. In terms of biological role, synaptic adhesion protein. Regulates the formation of exitatory synapses through the recruitment of pre-and-postsynaptic proteins. Organize the lamina/pathway-specific differentiation of dendrites. Plays an important role for auditory synaptic responses. Involved in the suppression of glioma. This chain is Leucine-rich repeat-containing protein 4 (Lrrc4), found in Mus musculus (Mouse).